Consider the following 204-residue polypeptide: dITP/XTP pyrophosphatase (204 aa).

8 to 13 (SNNAHK) contributes to the substrate binding site. Residues Glu-41 and Asp-76 each coordinate Mg(2+). Asp-76 serves as the catalytic Proton acceptor. Substrate contacts are provided by residues Ser-77, 159–162 (FGYD), Lys-182, and 187–188 (HR).

It belongs to the HAM1 NTPase family. In terms of assembly, homodimer. It depends on Mg(2+) as a cofactor.

It carries out the reaction XTP + H2O = XMP + diphosphate + H(+). The catalysed reaction is dITP + H2O = dIMP + diphosphate + H(+). The enzyme catalyses ITP + H2O = IMP + diphosphate + H(+). Functionally, pyrophosphatase that catalyzes the hydrolysis of nucleoside triphosphates to their monophosphate derivatives, with a high preference for the non-canonical purine nucleotides XTP (xanthosine triphosphate), dITP (deoxyinosine triphosphate) and ITP. Seems to function as a house-cleaning enzyme that removes non-canonical purine nucleotides from the nucleotide pool, thus preventing their incorporation into DNA/RNA and avoiding chromosomal lesions. This is dITP/XTP pyrophosphatase from Clostridium perfringens (strain 13 / Type A).